Reading from the N-terminus, the 490-residue chain is MDPVVVLGLCLSCLLLLSLWKQSYGGGKLPPGPTPFPILGNILQIGIQDISKSFTKLSEVYGPVFTVYLGMKPTVVIHGYDAVKEALVDLGEEFSGRIVFPLTAKINKGYGIVFSNGKRWKETRRFSLMTLRDFGMGKRSIEDRVQEEARCLVEELRKTNGSPCNPTFILGAAPCNVICSVIFQNRFDYTDQDFLSLMGKLNENFKILNSPWVQMCNNFPILIDYLPGSHNKILRNNIYIRNYVLEKIKEHQETLDINNPRDFIDCFLIKMEQEKDNQQSEFTIENLMTTLSDVFGAGTETTSTTLRYGLLLLMKHPEVIAKVQEEIERVIGRHRSPCMQDRSRMPYTDATVHEIQRYINLIPNNVPRATTCNVKFRSYLIPKGTAVITSLTSMLYNDKEFPNPDRFDPGHFLDASGKFRKSDYFMPFSTGKRVCVGEVLARMELFLFLTAILQNFTPKPLVDPKDIDTTPLVSGLGRVPPLYQLSFIPA.

Residue C435 coordinates heme.

Belongs to the cytochrome P450 family. It depends on heme as a cofactor.

The protein localises to the endoplasmic reticulum membrane. It localises to the microsome membrane. The enzyme catalyses an organic molecule + reduced [NADPH--hemoprotein reductase] + O2 = an alcohol + oxidized [NADPH--hemoprotein reductase] + H2O + H(+). In terms of biological role, cytochromes P450 are a group of heme-thiolate monooxygenases. In liver microsomes, this enzyme is involved in an NADPH-dependent electron transport pathway. It oxidizes a variety of structurally unrelated compounds, including steroids, fatty acids, and xenobiotics. The polypeptide is Cytochrome P450 2C1 (CYP2C1) (Oryctolagus cuniculus (Rabbit)).